A 1171-amino-acid chain; its full sequence is ATP-dependent helicase/deoxyribonuclease subunit B (1171 aa).

One can recognise a UvrD-like helicase ATP-binding domain in the interval 1–343 (MSLRFVIGRA…LVAEENYRYR (343 aa)). 8–15 (GRAGSGKS) contacts ATP. Positions 281-587 (MEQPRFHSPA…QFANIPPSLD (307 aa)) constitute a UvrD-like helicase C-terminal domain. [4Fe-4S] cluster contacts are provided by cysteine 805, cysteine 1129, cysteine 1132, and cysteine 1138.

It belongs to the helicase family. AddB/RexB type 1 subfamily. In terms of assembly, heterodimer of AddA and AddB. Mg(2+) serves as cofactor. It depends on [4Fe-4S] cluster as a cofactor.

Its function is as follows. The heterodimer acts as both an ATP-dependent DNA helicase and an ATP-dependent, dual-direction single-stranded exonuclease. Recognizes the chi site generating a DNA molecule suitable for the initiation of homologous recombination. The AddB subunit has 5' -&gt; 3' nuclease activity but not helicase activity. The polypeptide is ATP-dependent helicase/deoxyribonuclease subunit B (Bacillus thuringiensis (strain Al Hakam)).